We begin with the raw amino-acid sequence, 200 residues long: Ribonuclease HII (200 aa).

Residues Ala9–Gly198 enclose the RNase H type-2 domain. Positions 15, 16, and 107 each coordinate a divalent metal cation.

Belongs to the RNase HII family. It depends on Mn(2+) as a cofactor. Mg(2+) serves as cofactor.

The protein localises to the cytoplasm. The enzyme catalyses Endonucleolytic cleavage to 5'-phosphomonoester.. In terms of biological role, endonuclease that specifically degrades the RNA of RNA-DNA hybrids. This chain is Ribonuclease HII, found in Pseudoalteromonas translucida (strain TAC 125).